A 75-amino-acid polypeptide reads, in one-letter code: Translational regulator CsrA (75 aa).

It belongs to the CsrA/RsmA family. Homodimer; the beta-strands of each monomer intercalate to form a hydrophobic core, while the alpha-helices form wings that extend away from the core.

It is found in the cytoplasm. Functionally, a translational regulator that binds mRNA to regulate translation initiation and/or mRNA stability. Usually binds in the 5'-UTR at or near the Shine-Dalgarno sequence preventing ribosome-binding, thus repressing translation. Its main target seems to be the major flagellin gene, while its function is anatagonized by FliW. The chain is Translational regulator CsrA from Alkaliphilus metalliredigens (strain QYMF).